Consider the following 118-residue polypeptide: Large ribosomal subunit protein bL20 (118 aa).

The protein belongs to the bacterial ribosomal protein bL20 family.

Its function is as follows. Binds directly to 23S ribosomal RNA and is necessary for the in vitro assembly process of the 50S ribosomal subunit. It is not involved in the protein synthesizing functions of that subunit. In Kosmotoga olearia (strain ATCC BAA-1733 / DSM 21960 / TBF 19.5.1), this protein is Large ribosomal subunit protein bL20.